The following is a 329-amino-acid chain: Intradiol ring-cleavage dioxygenase hqdA (329 aa).

Tyr167, Tyr201, His225, and His227 together coordinate Fe cation.

Belongs to the intradiol ring-cleavage dioxygenase family. As to quaternary structure, homodimer. Requires Fe(3+) as cofactor.

It carries out the reaction catechol + O2 = cis,cis-muconate + 2 H(+). It catalyses the reaction benzene-1,2,4-triol + O2 = maleylacetate + 2 H(+). In terms of biological role, intradiol ring-cleavage dioxygenase involved in an alternative pathway to the protocatechuic acid pathway since it is active on hydroxyquinol and catechol but not on protocatechuic acid. This Aspergillus niger (strain ATCC MYA-4892 / CBS 513.88 / FGSC A1513) protein is Intradiol ring-cleavage dioxygenase hqdA.